The following is a 582-amino-acid chain: Aspartate--tRNA(Asp/Asn) ligase (582 aa).

Residue E177 participates in L-aspartate binding. The aspartate stretch occupies residues 201-204; sequence QLFK. R223 contributes to the L-aspartate binding site. ATP is bound by residues 223-225 and Q232; that span reads RDE. H447 provides a ligand contact to L-aspartate. Residue E481 participates in ATP binding. R488 is an L-aspartate binding site. Residue 533–536 participates in ATP binding; the sequence is GLDR.

The protein belongs to the class-II aminoacyl-tRNA synthetase family. Type 1 subfamily. In terms of assembly, homodimer.

The protein resides in the cytoplasm. The enzyme catalyses tRNA(Asx) + L-aspartate + ATP = L-aspartyl-tRNA(Asx) + AMP + diphosphate. Its function is as follows. Aspartyl-tRNA synthetase with relaxed tRNA specificity since it is able to aspartylate not only its cognate tRNA(Asp) but also tRNA(Asn). Reaction proceeds in two steps: L-aspartate is first activated by ATP to form Asp-AMP and then transferred to the acceptor end of tRNA(Asp/Asn). This is Aspartate--tRNA(Asp/Asn) ligase from Chlamydia trachomatis serovar A (strain ATCC VR-571B / DSM 19440 / HAR-13).